The chain runs to 78 residues: MGSLSIWHWIVVIAVVLLLFGRGKISDLMGDVAQGIKSFKKGLQDDEKTAEKSEPVKSIDHTSTPGATNRTDVGSKAV.

A helical transmembrane segment spans residues 1–21; it reads MGSLSIWHWIVVIAVVLLLFG. The span at 43-60 shows a compositional bias: basic and acidic residues; it reads LQDDEKTAEKSEPVKSID. The tract at residues 43–78 is disordered; it reads LQDDEKTAEKSEPVKSIDHTSTPGATNRTDVGSKAV. A compositionally biased stretch (polar residues) spans 61 to 72; it reads HTSTPGATNRTD.

This sequence belongs to the TatA/E family. As to quaternary structure, the Tat system comprises two distinct complexes: a TatABC complex, containing multiple copies of TatA, TatB and TatC subunits, and a separate TatA complex, containing only TatA subunits. Substrates initially bind to the TatABC complex, which probably triggers association of the separate TatA complex to form the active translocon.

Its subcellular location is the cell inner membrane. Functionally, part of the twin-arginine translocation (Tat) system that transports large folded proteins containing a characteristic twin-arginine motif in their signal peptide across membranes. TatA could form the protein-conducting channel of the Tat system. The polypeptide is Sec-independent protein translocase protein TatA (Rhodopseudomonas palustris (strain ATCC BAA-98 / CGA009)).